Here is an 850-residue protein sequence, read N- to C-terminus: Translation initiation factor IF-2 (850 aa).

Disordered stretches follow at residues 50–72 (LKSS…KTTS) and 92–267 (FVQR…TGPV). The span at 96 to 135 (SPEEIQAEQKREQEERRAAENAAREKADADARQRNEEQAR) shows a compositional bias: basic and acidic residues. Residues 136-172 (RQAAQAPAAAPVAKAEPAPAAAAPAAPAVPDAPVSED) show a composition bias toward low complexity. Composition is skewed to basic and acidic residues over residues 173-210 (AAAR…RGEA) and 234-243 (TTDEESDGFR). Over residues 244–257 (RGRGGKGKPKKRNQ) the composition is skewed to basic residues. Residues 350-517 (SRAPVVTVMG…AVLLQAEILE (168 aa)) form the tr-type G domain. Positions 359 to 366 (GHVDHGKT) are G1. 359–366 (GHVDHGKT) serves as a coordination point for GTP. Residues 384 to 388 (GITQH) form a G2 region. The interval 405–408 (DTPG) is G3. Residues 405–409 (DTPGH) and 459–462 (NKID) each bind GTP. Residues 459-462 (NKID) form a G4 region. Positions 495–497 (SAK) are G5.

Belongs to the TRAFAC class translation factor GTPase superfamily. Classic translation factor GTPase family. IF-2 subfamily.

It localises to the cytoplasm. Its function is as follows. One of the essential components for the initiation of protein synthesis. Protects formylmethionyl-tRNA from spontaneous hydrolysis and promotes its binding to the 30S ribosomal subunits. Also involved in the hydrolysis of GTP during the formation of the 70S ribosomal complex. This is Translation initiation factor IF-2 from Pseudomonas entomophila (strain L48).